We begin with the raw amino-acid sequence, 96 residues long: Class I hydrophobin 2 (96 aa).

A signal peptide spans 1–15 (MFKALIVALAAVAAA). 4 cysteine pairs are disulfide-bonded: Cys28–Cys77, Cys34–Cys71, Cys35–Cys55, and Cys78–Cys91.

This sequence belongs to the fungal hydrophobin family.

The protein resides in the secreted. Its subcellular location is the cell wall. Aerial growth, conidiation, and dispersal of filamentous fungi in the environment rely upon a capability of their secreting small amphipathic proteins called hydrophobins (HPBs) with low sequence identity. Class I can self-assemble into an outermost layer of rodlet bundles on aerial cell surfaces, conferring cellular hydrophobicity that supports fungal growth, development and dispersal; whereas Class II form highly ordered films at water-air interfaces through intermolecular interactions but contribute nothing to the rodlet structure. Hyd2 plays a neglectable role in hyphal growth and asexual development and does not seem involved in cellular hydrophobicity, conidial adhesion, stress tolerance nor insect pathogenicity. In Metarhizium robertsii (strain ARSEF 23 / ATCC MYA-3075) (Metarhizium anisopliae (strain ARSEF 23)), this protein is Class I hydrophobin 2.